The sequence spans 289 residues: Thymidylate synthase (289 aa).

Residues arginine 21 and arginine 150–arginine 151 each bind dUMP. The active-site Nucleophile is cysteine 170. Residues arginine 191 to aspartate 194, asparagine 202, and histidine 232 to tyrosine 234 each bind dUMP. Aspartate 194 lines the (6R)-5,10-methylene-5,6,7,8-tetrahydrofolate pocket. Alanine 288 serves as a coordination point for (6R)-5,10-methylene-5,6,7,8-tetrahydrofolate.

Belongs to the thymidylate synthase family. Bacterial-type ThyA subfamily. As to quaternary structure, homodimer.

The protein localises to the cytoplasm. The enzyme catalyses dUMP + (6R)-5,10-methylene-5,6,7,8-tetrahydrofolate = 7,8-dihydrofolate + dTMP. The protein operates within pyrimidine metabolism; dTTP biosynthesis. Functionally, catalyzes the reductive methylation of 2'-deoxyuridine-5'-monophosphate (dUMP) to 2'-deoxythymidine-5'-monophosphate (dTMP) while utilizing 5,10-methylenetetrahydrofolate (mTHF) as the methyl donor and reductant in the reaction, yielding dihydrofolate (DHF) as a by-product. This enzymatic reaction provides an intracellular de novo source of dTMP, an essential precursor for DNA biosynthesis. The polypeptide is Thymidylate synthase (Malacoplasma penetrans (strain HF-2) (Mycoplasma penetrans)).